The sequence spans 501 residues: Cobyric acid synthase (501 aa).

Residues 253–450 form the GATase cobBQ-type domain; sequence EIEIAVLKLP…LHGIFENGRW (198 aa). Cysteine 334 (nucleophile) is an active-site residue. Histidine 442 is an active-site residue.

The protein belongs to the CobB/CobQ family. CobQ subfamily.

It participates in cofactor biosynthesis; adenosylcobalamin biosynthesis. Functionally, catalyzes amidations at positions B, D, E, and G on adenosylcobyrinic A,C-diamide. NH(2) groups are provided by glutamine, and one molecule of ATP is hydrogenolyzed for each amidation. This Prochlorococcus marinus (strain MIT 9313) protein is Cobyric acid synthase.